The sequence spans 93 residues: Small ribosomal subunit protein uS19 (93 aa).

The protein belongs to the universal ribosomal protein uS19 family.

Its function is as follows. Protein S19 forms a complex with S13 that binds strongly to the 16S ribosomal RNA. This chain is Small ribosomal subunit protein uS19, found in Mycobacterium marinum (strain ATCC BAA-535 / M).